The chain runs to 102 residues: Small ribosomal subunit protein bS6 (102 aa).

The protein belongs to the bacterial ribosomal protein bS6 family.

Its function is as follows. Binds together with bS18 to 16S ribosomal RNA. The protein is Small ribosomal subunit protein bS6 (rpsF) of Deinococcus radiodurans (strain ATCC 13939 / DSM 20539 / JCM 16871 / CCUG 27074 / LMG 4051 / NBRC 15346 / NCIMB 9279 / VKM B-1422 / R1).